The following is a 228-amino-acid chain: Sodium channel regulatory subunit beta-4 (228 aa).

The signal sequence occupies residues 1–30; it reads MPGAGDGGKAPARWLGTGLLGLFLLPVTLS. An Ig-like C2-type domain is found at 31–148; the sequence is LEVSVGKATD…NNLQHHATIF (118 aa). The Extracellular portion of the chain corresponds to 31 to 162; that stretch reads LEVSVGKATD…DRLEEVDNTV (132 aa). N-linked (GlcNAc...) asparagine glycosylation is found at Asn45, Asn71, and Asn113. Cys53 and Cys131 form a disulfide bridge. A helical transmembrane segment spans residues 163-183; that stretch reads TLIILAVVGGVIGLLILILLI. Residues 184 to 228 are Cytoplasmic-facing; it reads KKLIIFILKKTREKKKECLVSSSGNDNTENGLPGSKAEEKPPSKV. A disordered region spans residues 200 to 228; it reads ECLVSSSGNDNTENGLPGSKAEEKPPSKV. The segment covering 203–213 has biased composition (polar residues); that stretch reads VSSSGNDNTEN. The segment covering 219-228 has biased composition (basic and acidic residues); the sequence is KAEEKPPSKV.

It belongs to the sodium channel auxiliary subunit SCN4B (TC 8.A.17) family. A voltage-gated sodium (Nav) channel consists of an ion-conducting pore-forming alpha subunit functional on its own that is regulated by one or more beta subunits. The beta subunit SCN4B is disulfide-linked to the pore-forming alpha subunit. Interacts with SCN1A; regulatory subunit of SCN1A/Nav1.1. Interacts with SCN2A; regulatory subunit of SCN2A/Nav1.2. Contains an interchain disulfide bond with SCN2A. In terms of processing, N-glycosylated. As to expression, expressed at a high level in dorsal root ganglia, at a lower level in brain, spinal cord, skeletal muscle and heart. Expressed in the atrium.

It is found in the cell membrane. Its function is as follows. Regulatory subunit of multiple voltage-gated sodium (Nav) channels directly mediating the depolarization of excitable membranes. Navs, also called VGSCs (voltage-gated sodium channels) or VDSCs (voltage-dependent sodium channels), operate by switching between closed and open conformations depending on the voltage difference across the membrane. In the open conformation they allow Na(+) ions to selectively pass through the pore, along their electrochemical gradient. The influx of Na+ ions provokes membrane depolarization, initiating the propagation of electrical signals throughout cells and tissues. The accessory beta subunits participate in localization and functional modulation of the Nav channels. Modulates the activity of SCN1A/Nav1.1. Modulates the activity of SCN2A/Nav1.2. The protein is Sodium channel regulatory subunit beta-4 of Homo sapiens (Human).